The following is a 193-amino-acid chain: General stress protein 16U (193 aa).

Belongs to the CAPAB/TerDEXZ family.

This is General stress protein 16U (yceD) from Bacillus subtilis (strain 168).